Here is a 275-residue protein sequence, read N- to C-terminus: MKIVVAKNIGFCFGVERAIRTVEELLDEGKKVVTDGEIVHNKQVMEQLTKKGLKVSSEMTDGEVFVVRAHGIPKDRLEELKKIFPEVVDLTCPIVSQLFKTAQRYAKERKVIVFGKEDHPEMVALRGYAPAIVTKVPFKLEEKKVVFLSQTTSSLEEYKEFVAAMIRMNEFEEAVFLNTICPVTVNREREVEELSKICDLSIVVGGKHSSNTGKLFRIASKHSKTIWIESPDELPADVVKYGTVCVFSGTSTPNSLIENVVRKLKEMEGKRDGTI.

Residue C12 coordinates [4Fe-4S] cluster. The (2E)-4-hydroxy-3-methylbut-2-enyl diphosphate site is built by H40 and H70. Dimethylallyl diphosphate is bound by residues H40 and H70. H40 and H70 together coordinate isopentenyl diphosphate. C92 is a binding site for [4Fe-4S] cluster. H119 contacts (2E)-4-hydroxy-3-methylbut-2-enyl diphosphate. H119 contributes to the dimethylallyl diphosphate binding site. H119 contacts isopentenyl diphosphate. E121 acts as the Proton donor in catalysis. T151 contacts (2E)-4-hydroxy-3-methylbut-2-enyl diphosphate. Residue C181 participates in [4Fe-4S] cluster binding. Residues S209, S210, N211, and S251 each coordinate (2E)-4-hydroxy-3-methylbut-2-enyl diphosphate. Residues S209, S210, N211, and S251 each coordinate dimethylallyl diphosphate. Residues S209, S210, N211, and S251 each contribute to the isopentenyl diphosphate site.

The protein belongs to the IspH family. It depends on [4Fe-4S] cluster as a cofactor.

The enzyme catalyses isopentenyl diphosphate + 2 oxidized [2Fe-2S]-[ferredoxin] + H2O = (2E)-4-hydroxy-3-methylbut-2-enyl diphosphate + 2 reduced [2Fe-2S]-[ferredoxin] + 2 H(+). It carries out the reaction dimethylallyl diphosphate + 2 oxidized [2Fe-2S]-[ferredoxin] + H2O = (2E)-4-hydroxy-3-methylbut-2-enyl diphosphate + 2 reduced [2Fe-2S]-[ferredoxin] + 2 H(+). It functions in the pathway isoprenoid biosynthesis; dimethylallyl diphosphate biosynthesis; dimethylallyl diphosphate from (2E)-4-hydroxy-3-methylbutenyl diphosphate: step 1/1. The protein operates within isoprenoid biosynthesis; isopentenyl diphosphate biosynthesis via DXP pathway; isopentenyl diphosphate from 1-deoxy-D-xylulose 5-phosphate: step 6/6. Functionally, catalyzes the conversion of 1-hydroxy-2-methyl-2-(E)-butenyl 4-diphosphate (HMBPP) into a mixture of isopentenyl diphosphate (IPP) and dimethylallyl diphosphate (DMAPP). Acts in the terminal step of the DOXP/MEP pathway for isoprenoid precursor biosynthesis. The protein is 4-hydroxy-3-methylbut-2-enyl diphosphate reductase of Thermotoga maritima (strain ATCC 43589 / DSM 3109 / JCM 10099 / NBRC 100826 / MSB8).